The following is a 287-amino-acid chain: MSRSSATLIGFTAILLWSTLALATSSTGAVPPFLLTALTFTIGGAVGIAAGLARGVGLSVLRQPWPVWVHGIGGLFGYHFFYFSALKLAPPAEAGLVAYLWPLLIVLFSAFLPGERLRPAHVAGALMGLAGTVVLLGARAGGFGFAPEYVPGYLAAAACAVIWSVYSVASRRFARVPTEVVAGFCLATAALSALCHILFEPSVWPVGSEWLAVVALGIGPVGIAFYTWDIGMKRGDVRLLGVLSYAAPVLSTLLLVVAGFAAPSGALAIACALIVGGAAVATLLARR.

The Cytoplasmic portion of the chain corresponds to 1 to 5; that stretch reads MSRSS. The helical transmembrane segment at 6–24 threads the bilayer; that stretch reads ATLIGFTAILLWSTLALAT. Residues 7–136 enclose the EamA 1 domain; sequence TLIGFTAILL…MGLAGTVVLL (130 aa). At 25 to 31 the chain is on the periplasmic side; it reads SSTGAVP. A helical transmembrane segment spans residues 32-54; it reads PFLLTALTFTIGGAVGIAAGLAR. Residues 55 to 65 are Cytoplasmic-facing; the sequence is GVGLSVLRQPW. A helical transmembrane segment spans residues 66 to 86; sequence PVWVHGIGGLFGYHFFYFSAL. Residues 87-90 lie on the Periplasmic side of the membrane; the sequence is KLAP. A helical transmembrane segment spans residues 91–111; it reads PAEAGLVAYLWPLLIVLFSAF. Residues 112–118 are Cytoplasmic-facing; that stretch reads LPGERLR. Residues 119–139 traverse the membrane as a helical segment; it reads PAHVAGALMGLAGTVVLLGAR. Residues 140 to 149 are Periplasmic-facing; sequence AGGFGFAPEY. Residues 150 to 170 form a helical membrane-spanning segment; it reads VPGYLAAAACAVIWSVYSVAS. The region spanning 151–281 is the EamA 2 domain; that stretch reads PGYLAAAACA…ALIVGGAAVA (131 aa). Over 171-176 the chain is Cytoplasmic; sequence RRFARV. A helical transmembrane segment spans residues 177–198; sequence PTEVVAGFCLATAALSALCHIL. Over 199–208 the chain is Periplasmic; the sequence is FEPSVWPVGS. Residues 209–233 form a helical membrane-spanning segment; it reads EWLAVVALGIGPVGIAFYTWDIGMK. Residues 234-236 are Cytoplasmic-facing; sequence RGD. The chain crosses the membrane as a helical span at residues 237 to 258; the sequence is VRLLGVLSYAAPVLSTLLLVVA. The Periplasmic portion of the chain corresponds to 259-264; sequence GFAAPS. Residues 265–284 traverse the membrane as a helical segment; the sequence is GALAIACALIVGGAAVATLL. Residues 285–287 lie on the Cytoplasmic side of the membrane; the sequence is ARR.

It belongs to the drug/metabolite transporter (DMT) superfamily. Aromatic amino acid/paraquat exporter (ArAA/P-E) (TC 2.A.7.17) family.

The protein localises to the cell inner membrane. It catalyses the reaction L-threonine(in) = L-threonine(out). The catalysed reaction is L-methionine(in) = L-methionine(out). It carries out the reaction L-lysine(in) = L-lysine(out). The enzyme catalyses L-glutamate(out) = L-glutamate(in). Its function is as follows. Amino acid transporter with broad substrate specificity. Can transport various amino acids, including L-threonine, L-methionine, L-lysine and L-glutamate. In Ancylobacter novellus (strain ATCC 8093 / DSM 506 / JCM 20403 / CCM 1077 / IAM 12100 / NBRC 12443 / NCIMB 10456) (Starkeya novella), this protein is Aromatic amino acid exporter YddG.